Here is a 377-residue protein sequence, read N- to C-terminus: 23S rRNA (uracil(747)-C(5))-methyltransferase RlmC (377 aa).

Residues Cys-3, Cys-11, Cys-14, and Cys-87 each contribute to the [4Fe-4S] cluster site. S-adenosyl-L-methionine contacts are provided by Gln-212, Phe-241, Glu-262, and Asn-307. Catalysis depends on Cys-334, which acts as the Nucleophile.

This sequence belongs to the class I-like SAM-binding methyltransferase superfamily. RNA M5U methyltransferase family. RlmC subfamily.

The catalysed reaction is uridine(747) in 23S rRNA + S-adenosyl-L-methionine = 5-methyluridine(747) in 23S rRNA + S-adenosyl-L-homocysteine + H(+). Its function is as follows. Catalyzes the formation of 5-methyl-uridine at position 747 (m5U747) in 23S rRNA. This is 23S rRNA (uracil(747)-C(5))-methyltransferase RlmC from Proteus mirabilis (strain HI4320).